The following is a 239-amino-acid chain: Elongation factor Ts (239 aa).

Residues 82-85 (TDFV) are involved in Mg(2+) ion dislocation from EF-Tu. The interval 213-239 (AAQTKPKAEEKPAAKKATSKKKKGKKK) is disordered. The span at 229-239 (ATSKKKKGKKK) shows a compositional bias: basic residues.

This sequence belongs to the EF-Ts family.

The protein resides in the cytoplasm. In terms of biological role, associates with the EF-Tu.GDP complex and induces the exchange of GDP to GTP. It remains bound to the aminoacyl-tRNA.EF-Tu.GTP complex up to the GTP hydrolysis stage on the ribosome. The protein is Elongation factor Ts of Acaryochloris marina (strain MBIC 11017).